A 572-amino-acid chain; its full sequence is Urease subunit alpha (572 aa).

The region spanning 134–572 is the Urease domain; it reads AGIDSHIHLI…AAMNQRYFFG (439 aa). H139, H141, and K222 together coordinate Ni(2+). K222 carries the N6-carboxylysine modification. Residue H224 coordinates substrate. H251 and H277 together coordinate Ni(2+). Residue H325 is the Proton donor of the active site. D365 serves as a coordination point for Ni(2+).

It belongs to the metallo-dependent hydrolases superfamily. Urease alpha subunit family. Heterotrimer of UreA (gamma), UreB (beta) and UreC (alpha) subunits. Three heterotrimers associate to form the active enzyme. It depends on Ni cation as a cofactor. Post-translationally, carboxylation allows a single lysine to coordinate two nickel ions.

It localises to the cytoplasm. It catalyses the reaction urea + 2 H2O + H(+) = hydrogencarbonate + 2 NH4(+). It participates in nitrogen metabolism; urea degradation; CO(2) and NH(3) from urea (urease route): step 1/1. This is Urease subunit alpha from Yersinia enterocolitica serotype O:8 / biotype 1B (strain NCTC 13174 / 8081).